A 1303-amino-acid chain; its full sequence is DNA-directed RNA polymerase subunit beta (1303 aa).

It belongs to the RNA polymerase beta chain family. In terms of assembly, the RNAP catalytic core consists of 2 alpha, 1 beta, 1 beta' and 1 omega subunit. When a sigma factor is associated with the core the holoenzyme is formed, which can initiate transcription.

The catalysed reaction is RNA(n) + a ribonucleoside 5'-triphosphate = RNA(n+1) + diphosphate. In terms of biological role, DNA-dependent RNA polymerase catalyzes the transcription of DNA into RNA using the four ribonucleoside triphosphates as substrates. This chain is DNA-directed RNA polymerase subunit beta, found in Chlorobaculum tepidum (strain ATCC 49652 / DSM 12025 / NBRC 103806 / TLS) (Chlorobium tepidum).